A 366-amino-acid chain; its full sequence is NADH-quinone oxidoreductase subunit D (366 aa).

This sequence belongs to the complex I 49 kDa subunit family. As to quaternary structure, NDH-1 is composed of 14 different subunits. Subunits NuoB, C, D, E, F, and G constitute the peripheral sector of the complex.

It is found in the cell membrane. The catalysed reaction is a quinone + NADH + 5 H(+)(in) = a quinol + NAD(+) + 4 H(+)(out). In terms of biological role, NDH-1 shuttles electrons from NADH, via FMN and iron-sulfur (Fe-S) centers, to quinones in the respiratory chain. The immediate electron acceptor for the enzyme in this species is believed to be a menaquinone. Couples the redox reaction to proton translocation (for every two electrons transferred, four hydrogen ions are translocated across the cytoplasmic membrane), and thus conserves the redox energy in a proton gradient. The chain is NADH-quinone oxidoreductase subunit D from Bacillus mycoides (strain KBAB4) (Bacillus weihenstephanensis).